Consider the following 465-residue polypeptide: Putative adhesin P1-like protein MPN_286 (465 aa).

Disordered stretches follow at residues 9-48 (GNGHRYGNDHRGSNSSTSGVTTQGQQSQNASGTEPASTFS), 59-78 (QGTLGGSQTTTTGKDIPKWP), and 93-167 (WRND…LPPN). The segment covering 21 to 37 (SNSSTSGVTTQGQQSQN) has biased composition (low complexity). Residues 38–48 (ASGTEPASTFS) show a composition bias toward polar residues. Residues 111 to 131 (TSATGSGQQGSSSGTTNSAGN) are compositionally biased toward low complexity. The segment covering 135 to 144 (LKQDKVDKSG) has biased composition (basic and acidic residues). Residues 145-156 (DSVTVAETTSGD) show a composition bias toward polar residues. Residues 157-167 (NLTNYTNLPPN) show a composition bias toward low complexity.

It belongs to the adhesin P1 family.

The polypeptide is Putative adhesin P1-like protein MPN_286 (Mycoplasma pneumoniae (strain ATCC 29342 / M129 / Subtype 1) (Mycoplasmoides pneumoniae)).